A 437-amino-acid polypeptide reads, in one-letter code: COP9 signalosome complex subunit 2 (437 aa).

The PCI domain maps to 249-418 (QENQWSEAQT…EVFTISQPKN (170 aa)).

It belongs to the CSN2 family. Component of the COP9 signalosome (CSN) complex composed of at least csn1, csn2, csn4 and csn5 subunits.

It is found in the cytoplasm. It localises to the nucleus. In terms of biological role, component of the COP9 signalosome (CSN) complex that acts as an regulator of the ubiquitin (Ubl) conjugation pathway by mediating the deneddylation of the cullin subunit of SCF-type E3 ubiquitin-protein ligase complexes. Required, indirectly, for activation of ribonucleotide reductase through the degradation of the protein spd1, thereby supplying deoxyribonucleotides for DNA replication and repair. The polypeptide is COP9 signalosome complex subunit 2 (csn2) (Schizosaccharomyces pombe (strain 972 / ATCC 24843) (Fission yeast)).